The primary structure comprises 71 residues: Large ribosomal subunit protein bL31 (71 aa).

Zn(2+) contacts are provided by Cys-16, Cys-18, Cys-36, and Cys-39.

The protein belongs to the bacterial ribosomal protein bL31 family. Type A subfamily. In terms of assembly, part of the 50S ribosomal subunit. The cofactor is Zn(2+).

Its function is as follows. Binds the 23S rRNA. In Thermotoga sp. (strain RQ2), this protein is Large ribosomal subunit protein bL31.